The sequence spans 562 residues: Thermosome subunit alpha (562 aa).

2 disordered regions span residues 1 to 23 (MAQQMGNQPLIVLSEDSQRTSGE) and 526 to 551 (GGQVGDDDGDDGPAGGPGGMGGGMGG). A compositionally biased stretch (gly residues) spans 537–551 (GPAGGPGGMGGGMGG).

It belongs to the TCP-1 chaperonin family. Forms an oligomeric complex of eight-membered rings.

Functionally, molecular chaperone; binds unfolded polypeptides in vitro, and has a weak ATPase activity. In Halobacterium salinarum (strain ATCC 700922 / JCM 11081 / NRC-1) (Halobacterium halobium), this protein is Thermosome subunit alpha (thsA).